A 242-amino-acid polypeptide reads, in one-letter code: Venom nerve growth factor 2 (242 aa).

An N-terminal signal peptide occupies residues 1-18 (MSMLCYTLIIAFLIGIWA). A propeptide spanning residues 19-125 (APKSEDNVPL…ALNRNIRSKR (107 aa)) is cleaved from the precursor. The segment at 46–69 (KALKTSRNTDQRHPAPKKAEDQEL) is disordered. The span at 52–66 (RNTDQRHPAPKKAED) shows a compositional bias: basic and acidic residues. Cystine bridges form between Cys-139–Cys-203, Cys-181–Cys-231, and Cys-191–Cys-233. Asn-147 carries an N-linked (GlcNAc...) asparagine glycan.

This sequence belongs to the NGF-beta family. In terms of assembly, homodimer; non-covalently linked. Expressed by the venom gland.

The protein resides in the secreted. Nerve growth factor is important for the development and maintenance of the sympathetic and sensory nervous systems. It stimulates division and differentiation of sympathetic and embryonic sensory neurons as well as basal forebrain cholinergic neurons in the brain. Its relevance in the snake venom is not clear. However, it has been shown to inhibit metalloproteinase-dependent proteolysis of platelet glycoprotein Ib alpha, suggesting a metalloproteinase inhibition to prevent metalloprotease autodigestion and/or protection against prey proteases. Binds a lipid between the two protein chains in the homodimer. The lipid-bound form promotes histamine relase from mouse mast cells, contrary to the lipid-free form. This is Venom nerve growth factor 2 from Demansia vestigiata (Lesser black whip snake).